The chain runs to 185 residues: Probable calcium-binding protein CML10 (185 aa).

The tract at residues 1–41 is disordered; it reads MVKIKMPALFRRRSGSKSPPLPQADPASGGGSPAPTPEEEM. EF-hand domains are found at residues 36 to 71, 72 to 107, 110 to 145, and 146 to 181; these read TPEE…LGHA, ATDD…ASGD, AVEE…LGEK, and ATVQ…GGSF. The Ca(2+) site is built by D49, N51, D53, R55, E60, D85, D87, D89, E96, D123, D125, N127, T129, E134, D159, N161, D163, and E170.

Potential calcium sensor. In Oryza sativa subsp. japonica (Rice), this protein is Probable calcium-binding protein CML10 (CML10).